The following is a 205-amino-acid chain: GTP-binding protein rho3 (205 aa).

20 to 27 (GDGAAGKT) serves as a coordination point for GTP. Residues 42–50 (YEPTIFENY) carry the Effector region motif. Residues 67 to 71 (DTAGQ) and 125 to 128 (LKCD) each bind GTP. A Cysteine methyl ester modification is found at Cys202. Cys202 is lipidated: S-geranylgeranyl cysteine. The propeptide at 203-205 (IIA) is removed in mature form.

This sequence belongs to the small GTPase superfamily. Rho family. Interacts with for3. Post-translationally, palmitoylated by the erf2-erf4 complex.

It localises to the cell membrane. Its function is as follows. Involved in controlling cell shape and septation. Regulates cell separation by modulating the function of the exocyst complex. Involved in post-Golgi vesicle transport. Involved in driving sexual development in a palmitoylation-dependent manner. The sequence is that of GTP-binding protein rho3 (rho3) from Schizosaccharomyces pombe (strain 972 / ATCC 24843) (Fission yeast).